The chain runs to 388 residues: Dipeptidase verJ (388 aa).

Zn(2+) is bound by residues His-29, Asp-31, and Glu-142. 3 residues coordinate substrate: His-169, Arg-243, and Asp-300.

Belongs to the metallo-dependent hydrolases superfamily. Peptidase M19 family. Requires Zn(2+) as cofactor.

It carries out the reaction an L-aminoacyl-L-amino acid + H2O = 2 an L-alpha-amino acid. The protein operates within mycotoxin biosynthesis. Functionally, dipeptidase; part of the gene cluster that mediates the biosynthesis of 11'-deoxyverticillin A, one of the dimeric epipolythiodioxopiperazines (ETPs) from the verticillin family that act as mycotoxins. 11'-deoxyverticillin A is required for normal conidiation. The nonribosomal peptide synthetase verP is speculated to be responsible for condensation of amino acids to form the carbon skeleton of verticillin, whereas the cluster-specific tailoring enzymes are involved in further modifications leading to the production of 11'-deoxyverticillin A. This is Dipeptidase verJ from Clonostachys rogersoniana.